The sequence spans 349 residues: N-acetyltaurine hydrolase (349 aa).

A divalent metal cation-binding residues include His-26, His-28, Glu-169, His-201, His-230, and Asp-298.

The protein belongs to the metallo-dependent hydrolases superfamily. Phosphotriesterase family. Requires a divalent metal cation as cofactor.

It is found in the cytoplasm. The protein localises to the cytosol. It catalyses the reaction N-acetyltaurine + H2O = taurine + acetate. The enzyme catalyses N-propanoyltaurine + H2O = propanoate + taurine. The catalysed reaction is N-acetyl-L-methionine + H2O = L-methionine + acetate. It carries out the reaction N-acetyl-L-isoleucine + H2O = L-isoleucine + acetate. It catalyses the reaction N-acetyl-L-leucine + H2O = L-leucine + acetate. The enzyme catalyses N-acetyl-L-valine + H2O = L-valine + acetate. Functionally, N-acetyltaurine hydrolase that catalyzes the hydrolysis of N-acetyltaurine into taurine and acetate. PTER also acts on other N-acetyl amino acids (Met, Ile, Leu, Val) and N-propionyltaurine, but at lower rates. This is N-acetyltaurine hydrolase (pter) from Salmo salar (Atlantic salmon).